The sequence spans 474 residues: Gamma-aminobutyric acid receptor subunit gamma-2 (474 aa).

Positions 1–38 are cleaved as a signal peptide; that stretch reads MSSPNTWSIGSSVYSPVFSQKMTLWILLLLSLYPGFTS. Residues 39 to 274 lie on the Extracellular side of the membrane; sequence QKSDDDYEDY…FDLSRRMGYF (236 aa). 2 N-linked (GlcNAc...) asparagine glycosylation sites follow: Asn-51 and Asn-128. Cys-189 and Cys-203 are joined by a disulfide. Asn-246 carries N-linked (GlcNAc...) asparagine glycosylation. Residues 275–295 form a helical membrane-spanning segment; sequence TIQTYIPCTLIVVLSWVSFWI. The Cytoplasmic segment spans residues 296–301; it reads NKDAVP. A helical membrane pass occupies residues 302–321; it reads ARTSLGITTVLTMTTLSTIA. The Extracellular portion of the chain corresponds to 322–333; that stretch reads RKSLPKVSYVTA. Residues 334–358 form a helical membrane-spanning segment; sequence MDLFVSVCFIFVFSALVEYGTLHYF. Topologically, residues 359-450 are cytoplasmic; it reads VSNRKPSKDK…IHIRIAKMDS (92 aa). Ser-381 is modified (phosphoserine; by PKC). Residues 451–472 form a helical membrane-spanning segment; that stretch reads YARIFFPTAFCLFNLVYWVSYL. Residues 473 to 474 are Extracellular-facing; sequence YL.

This sequence belongs to the ligand-gated ion channel (TC 1.A.9) family. Gamma-aminobutyric acid receptor (TC 1.A.9.5) subfamily. GABRG2 sub-subfamily. Heteropentamer, formed by a combination of alpha (GABRA1-6), beta (GABRB1-3), gamma (GABRG1-3), delta (GABRD), epsilon (GABRE), rho (GABRR1-3), pi (GABRP) and theta (GABRQ) chains, each subunit exhibiting distinct physiological and pharmacological properties. Interacts with GABARAP. Interacts with KIF21B. Identified in a complex of 720 kDa composed of LHFPL4, NLGN2, GABRA1, GABRB2, GABRG2 and GABRB3. Interacts with LHFPL4. Interacts with SHISA7; interaction leads to the regulation of GABA(A) receptor trafficking, channel deactivation kinetics and pharmacology. Glycosylated. Post-translationally, palmitoylated by ZDHHC3/GODZ; required for the accumulation of GABA(A) receptors at the postsynaptic membrane of inhibitory GABAergic synapses. Expressed in brain neurons (at protein level).

The protein localises to the postsynaptic cell membrane. The protein resides in the cell membrane. It localises to the cell projection. It is found in the dendrite. Its subcellular location is the cytoplasmic vesicle membrane. The catalysed reaction is chloride(in) = chloride(out). Allosterically activated by benzodiazepines. Activated by pentobarbital. Inhibited by the antagonist bicuculline. Inhibited by zinc ions. Potentiated by histamine. Gamma subunit of the heteropentameric ligand-gated chloride channel gated by gamma-aminobutyric acid (GABA), a major inhibitory neurotransmitter in the brain. GABA-gated chloride channels, also named GABA(A) receptors (GABAAR), consist of five subunits arranged around a central pore and contain GABA active binding site(s) located at the alpha and beta subunit interface(s). When activated by GABA, GABAARs selectively allow the flow of chloride anions across the cell membrane down their electrochemical gradient. Gamma-2/GABRG2-containing GABAARs are found at both synaptic and extrasynaptic sites. Chloride influx into the postsynaptic neuron following GABAAR opening decreases the neuron ability to generate a new action potential, thereby reducing nerve transmission. GABAARs containing alpha-1 and beta-2 or -3 subunits exhibit synaptogenic activity; the gamma-2 subunit being necessary but not sufficient to induce rapid synaptic contacts formation. Extrasynaptic gamma-2-containing receptors contribute to the tonic GABAergic inhibition. GABAARs function also as histamine receptor where histamine binds at the interface of two neighboring beta subunits and potentiates GABA response in a gamma-2 subunit-controlled manner. This is Gamma-aminobutyric acid receptor subunit gamma-2 from Mus musculus (Mouse).